The chain runs to 467 residues: MATEYALRMGDGKRIYLTKEKIIAEIEDGTANAADLGEIPALNANEMEKLAEILMMPGKTVSVEQGMEVPVTHDIGTIRLDGDQGNSGVGIPSSRLVGCMTHERAFGADTMELGHIDYSFKPVKPVVSNECQAMEVCQQNMIIPLFYGAMPNMGLYYTPDGPFENPGDLMKAFKIPEAWESMEHAAEHLTRDTVWVMQKLFASGADGVNFDTTGAAGDGDMYGTLHAIEALRKEFPDMYIEAGMAGECVLGMHGNLQYDGVTLAGLWPHQQAPLVAKAGANVFGPVCNTNTSKTSAWNLARAVTFMKAAVEASPIPCHVDMGMGVGGIPMLETPPIDAVTRASKAMVEIAGVDGIOIGVGDPMGMPIAHIMASGMTGMRAAGDLVARMEFSKNMRIGEAKEYVAKKLGVDQMDLVDEHVMRELREELDIGIITSVPGAAKGIAAKMNIEKLLDIKINSCNLFRKQIA.

Position 356 (pyrrolysine 356) is a non-standard amino acid, pyrrolysine.

The protein belongs to the dimethylamine methyltransferase family.

It catalyses the reaction Co(I)-[dimethylamine-specific corrinoid protein] + dimethylamine + H(+) = methyl-Co(III)-[dimethylamine-specific corrinoid protein] + methylamine. The protein operates within one-carbon metabolism; methanogenesis from dimethylamine. Catalyzes the transfer of a methyl group from dimethylamine to the corrinoid cofactor of MtbC. This is Dimethylamine methyltransferase MtbB1 (mtbB1) from Methanosarcina barkeri (strain Fusaro / DSM 804).